The following is a 141-amino-acid chain: Large ribosomal subunit protein bL17 (141 aa).

The protein belongs to the bacterial ribosomal protein bL17 family. Part of the 50S ribosomal subunit. Contacts protein L32.

The polypeptide is Large ribosomal subunit protein bL17 (Gluconacetobacter diazotrophicus (strain ATCC 49037 / DSM 5601 / CCUG 37298 / CIP 103539 / LMG 7603 / PAl5)).